Reading from the N-terminus, the 436-residue chain is UPF0229 protein mll9637 (436 aa).

A disordered region spans residues 54–103; the sequence is IPRKGTGEPTFGDDKESGRRQHILPGNRTFSSGDLIPKPGGGGGYGSAAG.

This sequence belongs to the UPF0229 family.

The protein is UPF0229 protein mll9637 of Mesorhizobium japonicum (strain LMG 29417 / CECT 9101 / MAFF 303099) (Mesorhizobium loti (strain MAFF 303099)).